Reading from the N-terminus, the 810-residue chain is DNA ligase (810 aa).

Residues 46-50 (DAEYD), 95-96 (SL), and glutamate 129 contribute to the NAD(+) site. Lysine 131 serves as the catalytic N6-AMP-lysine intermediate. NAD(+) contacts are provided by arginine 152, glutamate 189, lysine 305, and lysine 329. 4 residues coordinate Zn(2+): cysteine 434, cysteine 437, cysteine 458, and cysteine 464. The segment at 528 to 548 (ERRAESGTAEPPKKAAKKKGD) is disordered. In terms of domain architecture, BRCT spans 731–810 (AAASTFAGKT…DDWLAMVAQG (80 aa)).

Belongs to the NAD-dependent DNA ligase family. LigA subfamily. Mg(2+) is required as a cofactor. Mn(2+) serves as cofactor.

The enzyme catalyses NAD(+) + (deoxyribonucleotide)n-3'-hydroxyl + 5'-phospho-(deoxyribonucleotide)m = (deoxyribonucleotide)n+m + AMP + beta-nicotinamide D-nucleotide.. Its function is as follows. DNA ligase that catalyzes the formation of phosphodiester linkages between 5'-phosphoryl and 3'-hydroxyl groups in double-stranded DNA using NAD as a coenzyme and as the energy source for the reaction. It is essential for DNA replication and repair of damaged DNA. The chain is DNA ligase from Methylobacterium radiotolerans (strain ATCC 27329 / DSM 1819 / JCM 2831 / NBRC 15690 / NCIMB 10815 / 0-1).